We begin with the raw amino-acid sequence, 344 residues long: Cyclin-G2 (344 aa).

Residues 301 to 313 (ESESEDSCEDMSC) are compositionally biased toward acidic residues. Residues 301 to 320 (ESESEDSCEDMSCGEESLSS) form a disordered region.

This sequence belongs to the cyclin family. Cyclin G subfamily. High levels in cerebellum, thymus, spleen and prostate. Low levels in skeletal muscle.

Its subcellular location is the cytoplasm. May play a role in growth regulation and in negative regulation of cell cycle progression. The polypeptide is Cyclin-G2 (CCNG2) (Homo sapiens (Human)).